A 286-amino-acid chain; its full sequence is Bifunctional protein FolD (286 aa).

NADP(+) contacts are provided by residues 165–167 (GRS), Ser190, and Val231.

The protein belongs to the tetrahydrofolate dehydrogenase/cyclohydrolase family. Homodimer.

It catalyses the reaction (6R)-5,10-methylene-5,6,7,8-tetrahydrofolate + NADP(+) = (6R)-5,10-methenyltetrahydrofolate + NADPH. It carries out the reaction (6R)-5,10-methenyltetrahydrofolate + H2O = (6R)-10-formyltetrahydrofolate + H(+). Its pathway is one-carbon metabolism; tetrahydrofolate interconversion. Functionally, catalyzes the oxidation of 5,10-methylenetetrahydrofolate to 5,10-methenyltetrahydrofolate and then the hydrolysis of 5,10-methenyltetrahydrofolate to 10-formyltetrahydrofolate. This chain is Bifunctional protein FolD, found in Bacillus thuringiensis (strain Al Hakam).